A 202-amino-acid polypeptide reads, in one-letter code: Superoxide dismutase [Mn] (202 aa).

Histidine 27, histidine 82, aspartate 164, and histidine 168 together coordinate Mn(2+).

Belongs to the iron/manganese superoxide dismutase family. In terms of assembly, homodimer. Mn(2+) is required as a cofactor.

The catalysed reaction is 2 superoxide + 2 H(+) = H2O2 + O2. In terms of biological role, destroys superoxide anion radicals which are normally produced within the cells and which are toxic to biological systems. This chain is Superoxide dismutase [Mn] (sodA), found in Listeria innocua serovar 6a (strain ATCC BAA-680 / CLIP 11262).